The primary structure comprises 451 residues: MPREIITLQLGQCGNQIGFEFWKQLCAEHGISPEGIVEEFATEGTDRKDVFFYQADDEHYIPRAVLLDLEPRVIHSILNSPYAKLYNPENIYLSEHGGGAGNNWASGFSQGEKIHEDIFDIIDREADGSDSLEGFVLCHSIAGGTGSGLGSYLLERLNDRYPKKLVQTYSVFPNQDEMSDVVVQPYNSLLTLKRLTQNADCVVVLDNTALNRIATDRLHIQNPSFSQINQLVSTIMSASTTTLRYPGYMNNDLIGLIASLIPTPRLHFLMTGYTPLTTDQSVASVRKTTVLDVMRRLLQPKNVMVSTGRDRQTNHCYIAILNIIQGEVDPTQVHKSLQRIRERKLANFIPWGPASIQVALSRKSPYLPSAHRVSGLMMANHTSISSLFERTCRQYDKLRKREAFLEQFRKEDIFKENFDELDTSREIVQQLIDEYHAATRPDYISWGTQEQ.

Ser-131 bears the Phosphoserine; by BRSK1 mark. 142-148 contacts GTP; sequence AGGTGSG.

It belongs to the tubulin family. As to quaternary structure, component of the gamma-tubulin ring complex (gTuRC) consisting of TUBGCP2, TUBGCP3, TUBGCP4, TUBGCP5 and TUBGCP6 and gamma-tubulin TUBG1 or TUBG2. TUBGCP2, TUBGCP3, TUBGCP4, TUBGCP5 and TUBGCP6 assemble in a 5:5:2:1:1 stoichiometry; each is associated with a gamma-tubulin, thereby arranging 14 gamma-tubulins in a helical manner. Gamma-tubulin at the first position is blocked by TUBGCP3 at the last position, allowing 13 protafilaments to grow into a microtubule. The gTuRC (via TUBGCP3 and TUBGCP6) interacts with ACTB and MZT1; the interactions form a luminal bridge that stabilizes the initial structure during complex assembly. The gTuRC (via TUBGCP2) interacts with MZT2A/MZT2B and CDK5RAP2 (via CM1 motif); the interactions play a role in gTuRC activation. Interacts with alpha-beta tubulin heterodimers; the interaction allows microtubules to nucleate from the gTuRC. Interacts with B9D2. Interacts with CDK5RAP2; the interaction is leading to centrosomal localization of TUBG1 and CDK5RAP2. Interacts with CIMAP3. Interacts with SAS6 and NUP62 at the centrosome. Interacts with EML3 (phosphorylated at 'Thr-881') and HAUS8. Interacts with DNM2; this interaction may participate in centrosome cohesion. Interacts with CCDC66. In terms of processing, phosphorylation at Ser-131 by BRSK1 regulates centrosome duplication, possibly by mediating relocation of gamma-tubulin and its associated proteins from the cytoplasm to the centrosome.

The protein resides in the cytoplasm. It is found in the cytoskeleton. The protein localises to the microtubule organizing center. It localises to the centrosome. Its subcellular location is the spindle. Tubulin is the major constituent of microtubules, protein filaments consisting of alpha- and beta-tubulin heterodimers. Gamma-tubulin is a key component of the gamma-tubulin ring complex (gTuRC) which mediates microtubule nucleation. The gTuRC regulates the minus-end nucleation of alpha-beta tubulin heterodimers that grow into microtubule protafilaments, a critical step in centrosome duplication and spindle formation. This chain is Tubulin gamma-1 chain, found in Bos taurus (Bovine).